Consider the following 59-residue polypeptide: Chromatin protein Cren7 (59 aa).

The protein belongs to the Cren7 family. In terms of assembly, monomer. Post-translationally, methylated at multiple sites, to varying extents.

The protein resides in the chromosome. The protein localises to the cytoplasm. In terms of biological role, a chromatin protein, binds double-stranded DNA without sequence specificity. Constrains negative DNA supercoils. This Sulfolobus acidocaldarius (strain ATCC 33909 / DSM 639 / JCM 8929 / NBRC 15157 / NCIMB 11770) protein is Chromatin protein Cren7.